The sequence spans 424 residues: Serine--tRNA ligase (424 aa).

231-233 contributes to the L-serine binding site; it reads TAE. 262–264 contributes to the ATP binding site; the sequence is RSE. Glutamate 285 contributes to the L-serine binding site. 349–352 provides a ligand contact to ATP; sequence EISS. Serine 385 is an L-serine binding site.

This sequence belongs to the class-II aminoacyl-tRNA synthetase family. Type-1 seryl-tRNA synthetase subfamily. As to quaternary structure, homodimer. The tRNA molecule binds across the dimer.

The protein resides in the cytoplasm. The catalysed reaction is tRNA(Ser) + L-serine + ATP = L-seryl-tRNA(Ser) + AMP + diphosphate + H(+). It carries out the reaction tRNA(Sec) + L-serine + ATP = L-seryl-tRNA(Sec) + AMP + diphosphate + H(+). It participates in aminoacyl-tRNA biosynthesis; selenocysteinyl-tRNA(Sec) biosynthesis; L-seryl-tRNA(Sec) from L-serine and tRNA(Sec): step 1/1. Catalyzes the attachment of serine to tRNA(Ser). Is also able to aminoacylate tRNA(Sec) with serine, to form the misacylated tRNA L-seryl-tRNA(Sec), which will be further converted into selenocysteinyl-tRNA(Sec). The sequence is that of Serine--tRNA ligase from Marinobacter nauticus (strain ATCC 700491 / DSM 11845 / VT8) (Marinobacter aquaeolei).